Here is a 304-residue protein sequence, read N- to C-terminus: PTB domain-containing engulfment adapter protein 1 (304 aa).

Threonine 16 bears the Phosphothreonine mark. The region spanning 21–176 (SKHYIPYNAK…AGMQKRIQDL (156 aa)) is the PID domain. Residues 159 to 200 (DVETRKQIAGMQKRIQDLETENMELKNKVQDLESRLRTTQVS) are a coiled coil. Phosphoserine is present on serine 223.

Belongs to the ced-6 family. As to quaternary structure, homodimer. Interacts with clathrin and MEGF10. Interacts with GDP-bound ARF6, but not with GTP-bound ARF6. Part of a complex composed of GULP1, ACAP1 and ARF6. Interacts with ACAP1, LRP1 and STAB2. As to expression, detected throughout the brain, particularly in Purkinje cells, hippocampal and cortical neurons (at protein level).

It is found in the cytoplasm. Its function is as follows. Modulates cellular glycosphingolipid and cholesterol transport. May play a role in the internalization of various LRP1 ligands, such as PSAP. May function as an adapter protein. Required for efficient phagocytosis of apoptotic cells. Increases cellular levels of GTP-bound ARF6. The sequence is that of PTB domain-containing engulfment adapter protein 1 (Gulp1) from Mus musculus (Mouse).